The chain runs to 321 residues: Aspartate carbamoyltransferase catalytic subunit (321 aa).

Arg70 and Thr71 together coordinate carbamoyl phosphate. Residue Lys98 participates in L-aspartate binding. Carbamoyl phosphate contacts are provided by Arg120, His148, and Gln151. The L-aspartate site is built by Arg181 and Arg235. 2 residues coordinate carbamoyl phosphate: Gly276 and Pro277.

It belongs to the aspartate/ornithine carbamoyltransferase superfamily. ATCase family. As to quaternary structure, heterododecamer (2C3:3R2) of six catalytic PyrB chains organized as two trimers (C3), and six regulatory PyrI chains organized as three dimers (R2).

It carries out the reaction carbamoyl phosphate + L-aspartate = N-carbamoyl-L-aspartate + phosphate + H(+). Its pathway is pyrimidine metabolism; UMP biosynthesis via de novo pathway; (S)-dihydroorotate from bicarbonate: step 2/3. Its function is as follows. Catalyzes the condensation of carbamoyl phosphate and aspartate to form carbamoyl aspartate and inorganic phosphate, the committed step in the de novo pyrimidine nucleotide biosynthesis pathway. The sequence is that of Aspartate carbamoyltransferase catalytic subunit from Gluconacetobacter diazotrophicus (strain ATCC 49037 / DSM 5601 / CCUG 37298 / CIP 103539 / LMG 7603 / PAl5).